We begin with the raw amino-acid sequence, 101 residues long: uncharacterized protein (101 aa).

This is an uncharacterized protein from Mycobacterium tuberculosis (strain CDC 1551 / Oshkosh).